The chain runs to 248 residues: Mannose-binding protein C (248 aa).

Positions 1-20 are cleaved as a signal peptide; the sequence is MSLFPSLPLLLLSMVAASYS. Residues 42–99 enclose the Collagen-like domain; that stretch reads GINGFPGKDGRDGTKGEKGEPGQGLRGLQGPPGKLGPPGNPGPSGSPGAKGQKGDPGA. The interval 43-112 is disordered; sequence INGFPGKDGR…CDSSLANPER (70 aa). The residue at position 47 (Pro47) is a 4-hydroxyproline. The span at 49–61 shows a compositional bias: basic and acidic residues; sequence KDGRDGTKGEKGE. 4-hydroxyproline is present on residues Pro73, Pro79, Pro82, and Pro88. Positions 112 to 130 form a coiled coil; it reads RKTLQTEINRIKKWVTFSL. The region spanning 134–245 is the C-type lectin domain; that stretch reads VGKKLFLTNG…CSSSHLVICE (112 aa). Cystine bridges form between Cys155–Cys244 and Cys222–Cys236.

Oligomeric complex of 3 or more homotrimers. Interacts with MASP1 and MASP2. Interacts with MEP1A and MEP1B and may inhibit their catalytic activity. In terms of processing, hydroxylation on proline residues within the sequence motif, GXPG, is most likely to be 4-hydroxy as this fits the requirement for 4-hydroxylation in vertebrates.

The protein resides in the secreted. Functionally, calcium-dependent lectin involved in innate immune defense. Binds mannose, fucose and N-acetylglucosamine on different microorganisms and activates the lectin complement pathway. Binds to late apoptotic cells, as well as to apoptotic blebs and to necrotic cells, but not to early apoptotic cells, facilitating their uptake by macrophages. The protein is Mannose-binding protein C (MBL2) of Callithrix jacchus (White-tufted-ear marmoset).